Consider the following 213-residue polypeptide: Large ribosomal subunit protein uL3 (213 aa).

Residues 135–155 (THGSKNHRLPGSTGAGTTPGR) are disordered.

This sequence belongs to the universal ribosomal protein uL3 family. In terms of assembly, part of the 50S ribosomal subunit. Forms a cluster with proteins L14 and L19.

Its function is as follows. One of the primary rRNA binding proteins, it binds directly near the 3'-end of the 23S rRNA, where it nucleates assembly of the 50S subunit. The sequence is that of Large ribosomal subunit protein uL3 from Synechocystis sp. (strain ATCC 27184 / PCC 6803 / Kazusa).